A 98-amino-acid chain; its full sequence is Protein PROLINE CONTENT ALTERNATIVE 22 (98 aa).

Mainly expressed in flowers, to a lower extent, in roots and, at very low levels, in leaves and stems.

It localises to the cytoplasm. In terms of biological role, acts as an opponent to RZF1 during early seedling growth in term of proline accumulation in response to dehydration and abscisic acid (ABA). Confers sensitivity to abiotic stresses such as ABA, drought and osmotic stress (e.g. mannitol treatment) by preventing proline accumulation and by reducing the expression of dehydration-inducible genes. Promotes the production of lipid peroxidation by drought stress thus leading to malondialdehyde (MDA) synthesis. Prevents pollen tube elongation. Necessary for RZF1 expression in seedlings. This chain is Protein PROLINE CONTENT ALTERNATIVE 22, found in Arabidopsis thaliana (Mouse-ear cress).